We begin with the raw amino-acid sequence, 265 residues long: Cell division protein FtsQ (265 aa).

Residues 1–13 (MAGATTAKGGARR) show a composition bias toward low complexity. Positions 1-25 (MAGATTAKGGARRTPPPGPPPPALK) are disordered. Residues 1 to 35 (MAGATTAKGGARRTPPPGPPPPALKARRRLRLPRR) lie on the Cytoplasmic side of the membrane. The span at 14–23 (TPPPGPPPPA) shows a compositional bias: pro residues. The helical transmembrane segment at 36–58 (RTLLVTGVATALLGSGVTWLLYG) threads the bilayer. The Extracellular portion of the chain corresponds to 59–265 (SSWLRVEQVA…APTAPAVTHS (207 aa)). The 70-residue stretch at 62-131 (LRVEQVAVSG…DTIAVRVTER (70 aa)) folds into the POTRA domain.

The protein belongs to the FtsQ/DivIB family. FtsQ subfamily.

Its subcellular location is the cell membrane. In terms of biological role, essential cell division protein. This Streptomyces bingchenggensis (strain BCW-1) protein is Cell division protein FtsQ.